Consider the following 136-residue polypeptide: Putative pre-16S rRNA nuclease (136 aa).

This sequence belongs to the YqgF nuclease family.

The protein localises to the cytoplasm. Could be a nuclease involved in processing of the 5'-end of pre-16S rRNA. This is Putative pre-16S rRNA nuclease from Francisella philomiragia subsp. philomiragia (strain ATCC 25017 / CCUG 19701 / FSC 153 / O#319-036).